Here is a 318-residue protein sequence, read N- to C-terminus: Retinol dehydrogenase 5 (318 aa).

A helical transmembrane segment spans residues 1–21 (MWLPLLLGALLWAVLWLLRDR). The Lumenal segment spans residues 22–288 (QSLPASNAFV…TRYSPGWDAK (267 aa)). Position 32–56 (32–56 (FITGCDSGFGRLLALQLDQRGFRVL)) interacts with NADP(+). Residue N160 is glycosylated (N-linked (GlcNAc...) asparagine). S163 lines the substrate pocket. The Proton acceptor role is filled by Y175. Residues 289–309 (LLWLPASYLPASLVDAVLTWV) traverse the membrane as a helical segment. At 310-318 (LPKPAQAVY) the chain is on the cytoplasmic side.

Belongs to the short-chain dehydrogenases/reductases (SDR) family. Homodimer. As to expression, widely expressed. In the eye, abundant in the retinal pigment epithelium.

It localises to the endoplasmic reticulum membrane. It catalyses the reaction 11-cis-retinol + NAD(+) = 11-cis-retinal + NADH + H(+). The catalysed reaction is 9-cis-retinol + NAD(+) = 9-cis-retinal + NADH + H(+). The enzyme catalyses 13-cis-retinol + NAD(+) = 13-cis-retinal + NADH + H(+). It carries out the reaction androsterone + NAD(+) = 5alpha-androstan-3,17-dione + NADH + H(+). It catalyses the reaction 5alpha-androstane-3alpha,17beta-diol + NAD(+) = 17beta-hydroxy-5alpha-androstan-3-one + NADH + H(+). It participates in cofactor metabolism; retinol metabolism. Inhibited by 9-cis-, 13-cis- and all-trans-retinoic acids, with the most potent inhibitor being 13-cis-retinoic acid. Weakly inhibited by oleic acid. Its function is as follows. Catalyzes the oxidation of cis-isomers of retinol, including 11-cis-, 9-cis-, and 13-cis-retinol in an NAD-dependent manner. Has no activity towards all-trans retinal. Plays a significant role in 11-cis retinol oxidation in the retinal pigment epithelium cells (RPE). Also recognizes steroids (androsterone, androstanediol) as its substrates. The polypeptide is Retinol dehydrogenase 5 (Homo sapiens (Human)).